The sequence spans 419 residues: Oligouridylate-binding protein 1B (419 aa).

RRM domains are found at residues Arg54 to Ala128 and Phe139 to Lys217. Positions Lys217–Ala257 are disordered. Position 241 is a phosphoserine (Ser241). The 76-residue stretch at Thr260–Lys335 folds into the RRM 3 domain.

Interacts with UBA1A and UBA2A.

It is found in the nucleus. Its function is as follows. Heterogeneous nuclear ribonucleoprotein (hnRNP)-like protein that acts as a component of the pre-mRNA processing machinery. Functions to facilitate the nuclear maturation of plant pre-mRNAs. This chain is Oligouridylate-binding protein 1B (UBP1B), found in Arabidopsis thaliana (Mouse-ear cress).